We begin with the raw amino-acid sequence, 267 residues long: Methylglyoxal reductase DkgB (267 aa).

Tyr39 acts as the Proton donor in catalysis. Residue His97 participates in substrate binding. NADP(+) is bound at residue 179–231; the sequence is MTLAYGKALKDEVIARIAAKHNATPAQVILAWAMGEGYSVIPSSTRRENLASS.

Belongs to the aldo/keto reductase family. In terms of assembly, monomer.

The protein localises to the cytoplasm. The catalysed reaction is hydroxyacetone + NADP(+) = methylglyoxal + NADPH + H(+). Functionally, aldo-keto reductase that significantly contributes to cellular methylglyoxal detoxification by catalyzing the NADPH-dependent conversion of methylglyoxal to acetol. The chain is Methylglyoxal reductase DkgB from Salmonella typhimurium (strain LT2 / SGSC1412 / ATCC 700720).